Consider the following 231-residue polypeptide: uncharacterized protein (231 aa).

The N-terminal stretch at 1-25 (MAKWVPALLLRRVPLFSLRFRPASS) is a signal peptide. At 26–200 (TFLPVLAATE…SRPSPSATLT (175 aa)) the chain is on the extracellular side. The segment at 39–64 (SVPSGDLSMPVKTRAEGEDDGFGEAG) is disordered. Residues 201-225 (LLLASSCLLAPAPPSFILLLFTLIA) traverse the membrane as a helical segment. Topologically, residues 226 to 231 (PDLPHS) are cytoplasmic.

The protein resides in the membrane. This is an uncharacterized protein from Homo sapiens (Human).